The sequence spans 359 residues: Protein Wnt-5b (359 aa).

Residues 1–17 (MPSLLLLFTAALLSSWA) form the signal peptide. A disulfide bridge links Cys83 with Cys94. Asn93 and Asn99 each carry an N-linked (GlcNAc...) asparagine glycan. Cystine bridges form between Cys133–Cys141, Cys143–Cys161, Cys217–Cys231, Cys219–Cys226, Cys288–Cys319, Cys304–Cys314, Cys318–Cys358, Cys334–Cys349, Cys336–Cys346, and Cys341–Cys342. Ser223 carries O-palmitoleoyl serine; by PORCN lipidation. Asn291 and Asn305 each carry an N-linked (GlcNAc...) asparagine glycan.

This sequence belongs to the Wnt family. As to quaternary structure, interacts with PORCN. Post-translationally, palmitoleoylation is required for efficient binding to frizzled receptors. Depalmitoleoylation leads to Wnt signaling pathway inhibition.

It is found in the secreted. The protein localises to the extracellular space. Its subcellular location is the extracellular matrix. Its function is as follows. Ligand for members of the frizzled family of seven transmembrane receptors. Probable developmental protein. May be a signaling molecule which affects the development of discrete regions of tissues. Is likely to signal over only few cell diameters. This Homo sapiens (Human) protein is Protein Wnt-5b (WNT5B).